Here is a 236-residue protein sequence, read N- to C-terminus: MTVTADPVTLMKQEVGKAAAALVKSGSIVGLGTGSTTAYTIQYLGDRLKSGELTDIVGIPTSFQSEVLSKQYGVPLTTLDAVDHIDIAIDGADEVDPQKNLIKGGGAAHTREKVVDYLANQFIVVVDSGKLVDRLGSVFAVPVEVIPMAITPVTNAIKQLGGKPELRMGVKKAGPVITDQGNFVLDVRFDSIDDPVNLEKILNNIPGVLENGIFVNCADIVLVGEVKDGQPLVRQL.

Substrate is bound by residues 33-36 (TGST), 90-93 (DGAD), and 103-106 (KGGG). The Proton acceptor role is filled by Glu112. Lys130 contacts substrate.

This sequence belongs to the ribose 5-phosphate isomerase family. As to quaternary structure, homodimer.

It catalyses the reaction aldehydo-D-ribose 5-phosphate = D-ribulose 5-phosphate. It functions in the pathway carbohydrate degradation; pentose phosphate pathway; D-ribose 5-phosphate from D-ribulose 5-phosphate (non-oxidative stage): step 1/1. Its function is as follows. Catalyzes the reversible conversion of ribose-5-phosphate to ribulose 5-phosphate. The protein is Ribose-5-phosphate isomerase A of Trichormus variabilis (strain ATCC 29413 / PCC 7937) (Anabaena variabilis).